We begin with the raw amino-acid sequence, 663 residues long: Protein-arginine deiminase type-4 (663 aa).

Residues asparagine 153, aspartate 155, aspartate 157, aspartate 165, aspartate 168, glutamate 170, aspartate 176, and aspartate 179 each coordinate Ca(2+). Residues arginine 205, arginine 212, and arginine 218 each carry the citrulline modification. Glutamine 349 contributes to the Ca(2+) binding site. Aspartate 350 is a catalytic residue. Ca(2+) contacts are provided by glutamate 351, glutamate 353, aspartate 369, and serine 370. Arginine 372 is subject to Citrulline. Asparagine 373 is a binding site for Ca(2+). Citrulline is present on residues arginine 374 and arginine 383. Arginine 374 is a binding site for substrate. Residues aspartate 388, phenylalanine 407, leucine 410, and glutamate 411 each contribute to the Ca(2+) site. Residues histidine 471 and aspartate 473 contribute to the active site. Residue arginine 639 coordinates substrate. Cysteine 645 is a catalytic residue.

This sequence belongs to the protein arginine deiminase family. Ca(2+) is required as a cofactor. In terms of processing, autocitrullination at Arg-372 and Arg-374 inactivates the enzyme. As to expression, expressed in eosinophils and neutrophils, not expressed in peripheral monocytes or lymphocytes.

It is found in the cytoplasm. Its subcellular location is the nucleus. The protein resides in the cytoplasmic granule. The enzyme catalyses L-arginyl-[protein] + H2O = L-citrullyl-[protein] + NH4(+). Its activity is regulated as follows. Strongly Inhibited by F-amidine and N-alpha-benzoyl-N5-(2-chloro-1-iminoethyl)-L-ornithine amide (Cl-amidine). These inhibitors are however not specific to PADI4 and also inhibit other members of the family. Incorporation of a carboxylate ortho to the backbone amide of Cl-amidine results in inhibitors with increased specificity for PADI4: N-alpha-(2-carboxyl)benzoyl-N(5)-(2-fluoro-1-iminoethyl)-L-ornithine amide (o-F-amidine) and N-alpha-(2-carboxyl)benzoyl-N(5)-(2-chloro-1-iminoethyl)-L-ornithine amide (o-Cl-amidine). Strongly and specifically inhibited by Thr-Asp-F-amidine (TDFA); other members of the family are not inhibited. In terms of biological role, catalyzes the citrullination/deimination of arginine residues of proteins such as histones, thereby playing a key role in histone code and regulation of stem cell maintenance. Citrullinates histone H1 at 'Arg-54' (to form H1R54ci), histone H3 at 'Arg-2', 'Arg-8', 'Arg-17' and/or 'Arg-26' (to form H3R2ci, H3R8ci, H3R17ci, H3R26ci, respectively) and histone H4 at 'Arg-3' (to form H4R3ci). Acts as a key regulator of stem cell maintenance by mediating citrullination of histone H1: citrullination of 'Arg-54' of histone H1 (H1R54ci) results in H1 displacement from chromatin and global chromatin decondensation, thereby promoting pluripotency and stem cell maintenance. Promotes profound chromatin decondensation during the innate immune response to infection in neutrophils by mediating formation of H1R54ci. Required for the formation of neutrophil extracellular traps (NETs); NETs are mainly composed of DNA fibers and are released by neutrophils to bind pathogens during inflammation. Citrullination of histone H3 prevents their methylation by CARM1 and HRMT1L2/PRMT1 and represses transcription. Citrullinates EP300/P300 at 'Arg-2142', which favors its interaction with NCOA2/GRIP1. The polypeptide is Protein-arginine deiminase type-4 (PADI4) (Homo sapiens (Human)).